Here is a 291-residue protein sequence, read N- to C-terminus: Probable 2-(5''-triphosphoribosyl)-3'-dephosphocoenzyme-A synthase (291 aa).

Belongs to the CitG/MdcB family.

The catalysed reaction is 3'-dephospho-CoA + ATP = 2'-(5''-triphospho-alpha-D-ribosyl)-3'-dephospho-CoA + adenine. Its function is as follows. Involved in the formation of 2-(5''-phosphoribosyl)-3'-dephosphocoenzyme-A, the prosthetic group of the acyl-carrier protein of the malonate decarboxylase. This Pseudomonas syringae pv. tomato (strain ATCC BAA-871 / DC3000) protein is Probable 2-(5''-triphosphoribosyl)-3'-dephosphocoenzyme-A synthase.